The primary structure comprises 274 residues: ATP synthase subunit a (274 aa).

5 helical membrane-spanning segments follow: residues 43-63 (TLNI…LLVF), 103-123 (VIAP…MMDL), 149-169 (DVSI…FYSI), 223-243 (LIFI…LSVP), and 245-265 (AIFH…LTIV).

The protein belongs to the ATPase A chain family. In terms of assembly, F-type ATPases have 2 components, CF(1) - the catalytic core - and CF(0) - the membrane proton channel. CF(1) has five subunits: alpha(3), beta(3), gamma(1), delta(1), epsilon(1). CF(0) has three main subunits: a(1), b(2) and c(9-12). The alpha and beta chains form an alternating ring which encloses part of the gamma chain. CF(1) is attached to CF(0) by a central stalk formed by the gamma and epsilon chains, while a peripheral stalk is formed by the delta and b chains.

It is found in the cell inner membrane. In terms of biological role, key component of the proton channel; it plays a direct role in the translocation of protons across the membrane. The sequence is that of ATP synthase subunit a from Yersinia pestis bv. Antiqua (strain Angola).